The chain runs to 445 residues: Methionine aminopeptidase 2 (445 aa).

Residues 1-80 are disordered; it reads MAAQVASGVG…TSKVQTEPPR (80 aa). Residues 57-71 are compositionally biased toward basic residues; it reads AKKKKKKTKKKKKGT. His-195 provides a ligand contact to substrate. Asp-215, Asp-226, and His-295 together coordinate a divalent metal cation. His-303 contacts substrate. Residues Glu-331 and Glu-426 each contribute to the a divalent metal cation site.

The protein belongs to the peptidase M24A family. Methionine aminopeptidase eukaryotic type 2 subfamily. The cofactor is Co(2+). Zn(2+) is required as a cofactor. It depends on Mn(2+) as a cofactor. Fe(2+) serves as cofactor.

Its subcellular location is the cytoplasm. The catalysed reaction is Release of N-terminal amino acids, preferentially methionine, from peptides and arylamides.. Cotranslationally removes the N-terminal methionine from nascent proteins. The N-terminal methionine is often cleaved when the second residue in the primary sequence is small and uncharged (Met-Ala-, Cys, Gly, Pro, Ser, Thr, or Val). The sequence is that of Methionine aminopeptidase 2 from Paracoccidioides brasiliensis (strain Pb03).